A 515-amino-acid chain; its full sequence is Arabinose import ATP-binding protein AraG 2 (515 aa).

Positions 1–22 (MTMQTMTAASGHDAEAGTPPDG) are disordered. 2 ABC transporter domains span residues 25 to 260 (LALD…MVGR) and 260 to 511 (RSIE…LIKL). Position 57 to 64 (57 to 64 (GENGAGKS)) interacts with ATP.

It belongs to the ABC transporter superfamily. Arabinose importer (TC 3.A.1.2.2) family. In terms of assembly, the complex is composed of two ATP-binding proteins (AraG), two transmembrane proteins (AraH) and a solute-binding protein (AraF).

It is found in the cell inner membrane. The enzyme catalyses L-arabinose(out) + ATP + H2O = L-arabinose(in) + ADP + phosphate + H(+). In terms of biological role, part of the ABC transporter complex AraFGH involved in arabinose import. Responsible for energy coupling to the transport system. The protein is Arabinose import ATP-binding protein AraG 2 of Burkholderia cenocepacia (strain HI2424).